The primary structure comprises 234 residues: Demethylmenaquinone methyltransferase (234 aa).

S-adenosyl-L-methionine is bound by residues Thr-58, Asp-79, and 106 to 107; that span reads NA.

It belongs to the class I-like SAM-binding methyltransferase superfamily. MenG/UbiE family.

It catalyses the reaction a 2-demethylmenaquinol + S-adenosyl-L-methionine = a menaquinol + S-adenosyl-L-homocysteine + H(+). It participates in quinol/quinone metabolism; menaquinone biosynthesis; menaquinol from 1,4-dihydroxy-2-naphthoate: step 2/2. Methyltransferase required for the conversion of demethylmenaquinol (DMKH2) to menaquinol (MKH2). This Geobacillus kaustophilus (strain HTA426) protein is Demethylmenaquinone methyltransferase.